Consider the following 659-residue polypeptide: Heparin-sulfate lyase (659 aa).

Positions 1 to 24 (MTTKIFKRIIVFAVIALSSGNILA) are cleaved as a signal peptide. Tyrosine 294 (proton acceptor) is an active-site residue.

The protein belongs to the polysaccharide lyase 12 family.

It is found in the periplasm. The catalysed reaction is Elimination of sulfate, appears to act on linkages between N-acetyl-D-glucosamine and uronate. Product is an unsaturated sugar.. In terms of biological role, specifically cleaves heparan sulfate-rich regions of acidic polysaccharides. Does not act on N,O-desulfated glucosamine or N-acetyl-O-sulfated glucosamine linkages. Functions in cleaving metazoan heparan sulfate and providing carbon, nitrogen and sulfate sources for microorganisms. The polypeptide is Heparin-sulfate lyase (hepC) (Pedobacter heparinus (strain ATCC 13125 / DSM 2366 / CIP 104194 / JCM 7457 / NBRC 12017 / NCIMB 9290 / NRRL B-14731 / HIM 762-3)).